A 90-amino-acid polypeptide reads, in one-letter code: Probable small nuclear ribonucleoprotein E (90 aa).

One can recognise a Sm domain in the interval 14 to 89 (VNLIFRYLQN…ITLIHAAAQE (76 aa)).

Belongs to the snRNP Sm proteins family. As to quaternary structure, core component of the spliceosomal U1, U2, U4 and U5 small nuclear ribonucleoproteins (snRNPs), the building blocks of the spliceosome.

It is found in the nucleus. The protein resides in the cytoplasm. It localises to the cytosol. In terms of biological role, plays a role in pre-mRNA splicing as a core component of the spliceosomal U1, U2, U4 and U5 small nuclear ribonucleoproteins (snRNPs), the building blocks of the spliceosome. The protein is Probable small nuclear ribonucleoprotein E (snr-6) of Caenorhabditis briggsae.